The following is a 791-amino-acid chain: MGDQRLQDWLRSPGMDSKPWYCNKRPSKCFAKCKHRRLRFPPMDTQNWVFVKEGMDDFRYGCPSPEDTLVCRRDEFLLPKISLRGPQADPKSGQKKLLKKAALFSKLSPAQLARKAFVEQVEAQLMAKHPLAMYPNLGEDMPPDLLLQVLKHLDPERELEDAWACCETQEKTTEVPTEPGKHPCGEFCLKPPETPVSHLLPEPPETGVSHLSPEPPKTPVSSLRPEPPETGVSHLRPEPPETGVSHIRPGPPITRRRSSLLRQLLKLDSERKLEDARAPCEGREKTTDEPTEPGKYPCGKFCPRPFETPLSHLRQEPPKTPVSSLRPEPPETGESHLRLEHSKTRRGSSLRSEPSETGVSRLRLAPPKTRRGSSLHAEPSKTGVSHLSPEPPKTEVSHLHPVPPKTGVCHLRLEPPDTSQVSNLLLYILKVLDSGRTLKDVWDRCEARVKKTKEPTEPHKSPCGEPCLQPPETQVSHPHPEHPKTRRRSSLHSQPPKTRRTSSLRSEPPKTRRTSSLRSEPPKTRRTSSLGPEPPKTRRVSSLRPELPKSRRVSSLHPEPPKAPESHQFSEPPKIRASYIKELLQEDTPSTKECVSDSLQYRYTSEKLREFFKWAGDLGADEESIRNLFDFTPKYRATHEDQKFKKVKECSSELKYSMELDEKDEDKFFSQEKYWGRKFHTPSNSYTAQRVKMKYGAWYLKPKLWKKLRSDEPLIDPKLLLKKPDEPDVLDDLYGPIAFKDFILSKGYEMPGIIQRLFARRGWTYDSVKTPIQRAMIFYKYKEIVEASEED.

Disordered regions lie at residues 195–257, 274–409, and 449–573; these read PVSH…TRRR, EDAR…TGVC, and VKKT…SEPP. Composition is skewed to basic and acidic residues over residues 274 to 288 and 333 to 342; these read EDAR…KTTD and GESHLRLEHS. Polar residues predominate over residues 349-358; the sequence is SLRSEPSETG. Residues 449–462 show a composition bias toward basic and acidic residues; the sequence is VKKTKEPTEPHKSP.

The protein belongs to the FAM47 family.

The polypeptide is Protein FAM47A (FAM47A) (Homo sapiens (Human)).